The chain runs to 534 residues: Replication factor C large subunit (534 aa).

Position 45-52 (45-52) interacts with ATP; sequence GPPGIGKT. Basic and acidic residues predominate over residues 444-463; it reads KNKKEIKVKTKKDTVEDSSK. Positions 444–534 are disordered; that stretch reads KNKKEIKVKT…KSRQTTLFDF (91 aa). Residues 488–510 show a composition bias toward low complexity; it reads SSNSTTKNKTESPKNSSKTSSKT. Positions 517-527 are enriched in basic residues; it reads TSKKNNKKKSR.

The protein belongs to the activator 1 small subunits family. RfcL subfamily. In terms of assembly, heteromultimer composed of small subunits (RfcS) and large subunits (RfcL).

Functionally, part of the RFC clamp loader complex which loads the PCNA sliding clamp onto DNA. The sequence is that of Replication factor C large subunit from Methanosphaera stadtmanae (strain ATCC 43021 / DSM 3091 / JCM 11832 / MCB-3).